Reading from the N-terminus, the 150-residue chain is Large ribosomal subunit protein bL9 (150 aa).

The protein belongs to the bacterial ribosomal protein bL9 family.

Binds to the 23S rRNA. The sequence is that of Large ribosomal subunit protein bL9 from Streptococcus pneumoniae (strain CGSP14).